The primary structure comprises 394 residues: Elongation factor Tu (394 aa).

Positions 10–204 (KPHINVGTIG…SLDKYIPIPV (195 aa)) constitute a tr-type G domain. The interval 19–26 (GHVDHGKT) is G1. 19 to 26 (GHVDHGKT) contacts GTP. T26 contacts Mg(2+). A G2 region spans residues 60–64 (GITIN). The tract at residues 81–84 (DCPG) is G3. Residues 81–85 (DCPGH) and 136–139 (NKCD) contribute to the GTP site. Residues 136 to 139 (NKCD) form a G4 region. The interval 174–176 (SAL) is G5.

This sequence belongs to the TRAFAC class translation factor GTPase superfamily. Classic translation factor GTPase family. EF-Tu/EF-1A subfamily. As to quaternary structure, monomer.

It is found in the cytoplasm. The catalysed reaction is GTP + H2O = GDP + phosphate + H(+). Functionally, GTP hydrolase that promotes the GTP-dependent binding of aminoacyl-tRNA to the A-site of ribosomes during protein biosynthesis. This is Elongation factor Tu from Buchnera aphidicola subsp. Cinara cedri (strain Cc).